A 329-amino-acid chain; its full sequence is G-protein coupled receptor 3 (329 aa).

Residues 1–43 are Extracellular-facing; the sequence is MMWGAGRSMAWFSAGSGSVNVSIDPAEEPTGPATLLPSPRAWD. N-linked (GlcNAc...) asparagine glycosylation is present at N20. Residues 44–64 form a helical membrane-spanning segment; that stretch reads VVLCISGTLVSCENALVVAII. Topologically, residues 65–73 are cytoplasmic; the sequence is VGTPAFRAP. The helical transmembrane segment at 74-94 threads the bilayer; the sequence is MFLLVGSLAVADLLAGLGLVL. Over 95-108 the chain is Extracellular; that stretch reads HFAADFCIGSPEMS. A helical membrane pass occupies residues 109-129; the sequence is LVLVGVLATAFTASIGSLLAI. Residues 130–153 are Cytoplasmic-facing; that stretch reads TVDRYLSLYNALTYYSETTVTRTY. Residues 154–174 traverse the membrane as a helical segment; the sequence is VMLALVWVGALGLGLVPVLAW. The Extracellular segment spans residues 175–192; the sequence is NCRDGLTTCGVVYPLSKN. The chain crosses the membrane as a helical span at residues 193-213; sequence HLVVLAIVFFMVFGIMLQLYA. Over 214–247 the chain is Cytoplasmic; sequence QICRIVCRHAQQIALQRHLLPASHYVATRKGIAT. A helical membrane pass occupies residues 248-268; the sequence is LAVVLGAFAACWLPFTVYCLL. The Extracellular segment spans residues 269–277; sequence GDANSPPLY. Residues 278-298 form a helical membrane-spanning segment; sequence TYLTLLPATYNSMINPVIYAF. The Cytoplasmic segment spans residues 299–329; the sequence is RNQDVQKVLWAICCCCSTSKIPFRSRSPSDV. C312 is lipidated: S-palmitoyl cysteine. Residues S323, S325, and S327 each carry the phosphoserine modification.

It belongs to the G-protein coupled receptor 1 family. As to expression, abundantly expressed in granule neurons at all development stages. Enriched in the longest tips of neurites during differentiation of hippocampal neurons.

The protein resides in the cell membrane. Functionally, constitutively active G-protein coupled receptor that maintains high 3'-5'-cyclic adenosine monophosphate (cAMP) levels that a plays a role in serveral processes including meiotic arrest in oocytes or neuronal development via activation of numerous intracellular signaling pathways. Acts as an essential activator of thermogenic adipocytes and drives thermogenesis via its intrinsic G(s)-coupling activity without the requirement of a ligand. Has a potential role in modulating a number of brain functions, including behavioral responses to stress, amyloid-beta peptide generation in neurons. Stimulates neurite outgrowth in cerebellar granular neurons modulated via PKA, ERK, and most strongly PI3K-mediated signaling pathways. The polypeptide is G-protein coupled receptor 3 (Gpr3) (Rattus norvegicus (Rat)).